Here is a 491-residue protein sequence, read N- to C-terminus: Cytochrome P450 2F3 (491 aa).

C436 provides a ligand contact to heme.

The protein belongs to the cytochrome P450 family. It depends on heme as a cofactor. As to expression, lung specific.

It localises to the endoplasmic reticulum membrane. Its subcellular location is the microsome membrane. The catalysed reaction is an organic molecule + reduced [NADPH--hemoprotein reductase] + O2 = an alcohol + oxidized [NADPH--hemoprotein reductase] + H2O + H(+). Functionally, bioactivates 3-methylindole (3MI) by dehydrogenation to the putative electrophile 3-methylene-indolenine. Stereoselectively catalyzes the formation of the 1R,2S-oxide from naphthalene. Lack activity with other common P450 substrates including 7-ethoxycoumarin. The chain is Cytochrome P450 2F3 (CYP2F3) from Capra hircus (Goat).